Consider the following 284-residue polypeptide: Tropomyosin (284 aa).

The stretch at 1–284 (MEAIKNKMQA…DQTFAELTGY (284 aa)) forms a coiled coil. The disordered stretch occupies residues 22-43 (AEIAEQKSRDANLRAEKSEEEV).

Belongs to the tropomyosin family. In terms of assembly, homodimer.

In terms of biological role, tropomyosin, in association with the troponin complex, plays a central role in the calcium dependent regulation of muscle contraction. The polypeptide is Tropomyosin (Lepidoglyphus destructor (Storage mite)).